The following is a 118-amino-acid chain: Large ribosomal subunit protein bL19 (118 aa).

Belongs to the bacterial ribosomal protein bL19 family.

In terms of biological role, this protein is located at the 30S-50S ribosomal subunit interface and may play a role in the structure and function of the aminoacyl-tRNA binding site. This Helicobacter pylori (strain HPAG1) protein is Large ribosomal subunit protein bL19.